The primary structure comprises 282 residues: Biotin synthase (282 aa).

Residues 1-228 (MQEIFLCSIS…NARLMVAGGR (228 aa)) enclose the Radical SAM core domain. [4Fe-4S] cluster-binding residues include Cys17, Cys21, and Cys24. [2Fe-2S] cluster contacts are provided by Cys61, Cys96, Cys154, and Arg221.

This sequence belongs to the radical SAM superfamily. Biotin synthase family. Homodimer. It depends on [4Fe-4S] cluster as a cofactor. [2Fe-2S] cluster is required as a cofactor.

The catalysed reaction is (4R,5S)-dethiobiotin + (sulfur carrier)-SH + 2 reduced [2Fe-2S]-[ferredoxin] + 2 S-adenosyl-L-methionine = (sulfur carrier)-H + biotin + 2 5'-deoxyadenosine + 2 L-methionine + 2 oxidized [2Fe-2S]-[ferredoxin]. The protein operates within cofactor biosynthesis; biotin biosynthesis; biotin from 7,8-diaminononanoate: step 2/2. In terms of biological role, catalyzes the conversion of dethiobiotin (DTB) to biotin by the insertion of a sulfur atom into dethiobiotin via a radical-based mechanism. The protein is Biotin synthase of Helicobacter pylori (strain G27).